The following is a 596-amino-acid chain: Probable lysosomal cobalamin transporter (596 aa).

A run of 10 helical transmembrane segments spans residues 13–33 (IWVAYAVAVALVLLVAIITTF), 45–65 (VSIVAIVSLTSLLATVFLLPV), 99–119 (VVYYTLYSFDALLCLIVIPFA), 150–170 (LGFVFLVLILFLLGFFVPAAG), 201–221 (LLITLGTFLYTLYTGAGLALL), 318–338 (LLGGILLLLLSILVWASMLIT), 353–373 (GYILGHINVFQPVNWIFVQSA), 381–401 (ILMALLVLFFFGSSITGIATI), 425–445 (IATVMLALIILAINYAIAMIV), and 512–532 (VFGAIDFWAQFAFLGVFMVVF). A glycan (N-linked (GlcNAc...) asparagine) is linked at asparagine 543. Residues 576 to 596 (GRAKNRNGYGTGGGEGSNGRG) form a disordered region. The span at 584–596 (YGTGGGEGSNGRG) shows a compositional bias: gly residues.

It belongs to the LIMR family. LMBRD1 subfamily.

It localises to the lysosome membrane. In terms of biological role, probable lysosomal cobalamin transporter. Required to export cobalamin from lysosomes allowing its conversion to cofactors. The polypeptide is Probable lysosomal cobalamin transporter (Podospora anserina (strain S / ATCC MYA-4624 / DSM 980 / FGSC 10383) (Pleurage anserina)).